We begin with the raw amino-acid sequence, 123 residues long: uncharacterized protein (123 aa).

The helical transmembrane segment at glycine 5–tyrosine 25 threads the bilayer. The interval lysine 32–aspartate 53 is disordered. Over residues leucine 36 to proline 47 the composition is skewed to pro residues.

Belongs to the asfivirus CP123L family.

The protein resides in the host membrane. The protein localises to the virion. This is an uncharacterized protein from Ornithodoros (relapsing fever ticks).